A 23-amino-acid chain; its full sequence is Magainin-B2 (23 aa).

In terms of tissue distribution, expressed by the skin glands.

It is found in the secreted. In terms of biological role, has antimicrobial activity against Gram-negative bacterium E.coli ATCC 25922 (MIC=50 uM) and against fungus C.albicans ATCC 90028 (MIC=100 uM). Has no hemolytic activity against human erythrocytes even at high concentrations. This is Magainin-B2 from Xenopus borealis (Kenyan clawed frog).